The sequence spans 259 residues: Activator of lactoyl-CoA dehydratase (259 aa).

[4Fe-4S] cluster is bound by residues C125 and C164.

Homodimer. Requires [4Fe-4S] cluster as cofactor.

Its function is as follows. Required for the activation of lactoyl-CoA dehydratase. This protein is extremely sensitive towards oxygen. This chain is Activator of lactoyl-CoA dehydratase (lcdC), found in Anaerotignum propionicum (Clostridium propionicum).